Here is a 516-residue protein sequence, read N- to C-terminus: Arabinose import ATP-binding protein AraG (516 aa).

ABC transporter domains follow at residues 5-240 (LRFD…MVGR) and 240-497 (REIS…LPQS). Residue 37–44 (GENGAGKS) coordinates ATP.

Belongs to the ABC transporter superfamily. Arabinose importer (TC 3.A.1.2.2) family. In terms of assembly, the complex is composed of two ATP-binding proteins (AraG), two transmembrane proteins (AraH) and a solute-binding protein (AraF).

Its subcellular location is the cell inner membrane. It carries out the reaction L-arabinose(out) + ATP + H2O = L-arabinose(in) + ADP + phosphate + H(+). Part of the ABC transporter complex AraFGH involved in arabinose import. Responsible for energy coupling to the transport system. This chain is Arabinose import ATP-binding protein AraG, found in Paraburkholderia xenovorans (strain LB400).